A 102-amino-acid polypeptide reads, in one-letter code: Small ribosomal subunit protein uS10 (102 aa).

It belongs to the universal ribosomal protein uS10 family. As to quaternary structure, part of the 30S ribosomal subunit.

Its function is as follows. Involved in the binding of tRNA to the ribosomes. In Pediococcus pentosaceus (strain ATCC 25745 / CCUG 21536 / LMG 10740 / 183-1w), this protein is Small ribosomal subunit protein uS10.